Here is a 566-residue protein sequence, read N- to C-terminus: OTU domain-containing protein 5 (566 aa).

2 disordered regions span residues 1–117 (MTIL…GDAL) and 146–175 (PGHS…GAGY). Residues 11–30 (PPDADPANEPPPPGPLPPAP) show a composition bias toward pro residues. The segment covering 32-47 (RGGGVGVGGGGTGVGG) has biased composition (gly residues). Residues 63-75 (ASPPPQGPLPGPP) are compositionally biased toward pro residues. S64 carries the post-translational modification Phosphoserine. Residues 84-97 (AVPPGAVAGPRPQQ) show a composition bias toward low complexity. A compositionally biased stretch (gly residues) spans 105-115 (GPGGPGGGPGD). S165 is modified (phosphoserine). Position 175 is a phosphotyrosine (Y175). Residue S177 is modified to Phosphoserine. T195 bears the Phosphothreonine mark. The region spanning 213–336 (FIIKQMKEDG…NIHYNSVVNP (124 aa)) is the OTU domain. A cys-loop region spans residues 218–224 (MKEDGAC). The active site involves D221. C224 (nucleophile) is an active-site residue. A variable-loop region spans residues 273–283 (KRKNNCHGNHI). S323 is modified (phosphoserine). A his-loop region spans residues 324-329 (YHRNIH). H329 is a catalytic residue. Residues S332 and S370 each carry the phosphoserine modification. Positions 413–497 (ARQVRGPSQP…PGTSSQFSAG (85 aa)) are disordered. Low complexity-rich tracts occupy residues 425–438 (ASAT…AASS) and 445–457 (SRSP…ASSP). S447 carries the phosphoserine modification. T502 is subject to Phosphothreonine. S503 bears the Phosphoserine mark.

Belongs to the peptidase C85 family. As to quaternary structure, interacts with TRAF3. Post-translationally, phosphorylation at Ser-177 is required for deubiquitinating activity. Phosphorylation at Ser-323, Ser-332 and Ser-503 by MTOR promotes its activity.

The protein resides in the nucleus. It catalyses the reaction Thiol-dependent hydrolysis of ester, thioester, amide, peptide and isopeptide bonds formed by the C-terminal Gly of ubiquitin (a 76-residue protein attached to proteins as an intracellular targeting signal).. Its activity is regulated as follows. Inhibited by N-ethyl-maleimide (NEM). In terms of biological role, deubiquitinating enzyme that functions as a negative regulator of the innate immune system. Has peptidase activity towards 'Lys-48'- and 'Lys-63'-linked polyubiquitin chains. Can also cleave 'Lys-11'-linked ubiquitin chains (in vitro). Acts via TRAF3 deubiquitination and subsequent suppression of type I interferon (IFN) production. Controls neuroectodermal differentiation through cleaving 'Lys-48'-linked ubiquitin chains to counteract degradation of select chromatin regulators such as ARID1A, HDAC2 and HCF1. Acts as a positive regulator of mTORC1 and mTORC2 signaling following phosphorylation by MTOR: acts by mediating deubiquitination of BTRC, leading to its stability. This chain is OTU domain-containing protein 5, found in Rattus norvegicus (Rat).